The following is a 505-amino-acid chain: ATP synthase subunit alpha (505 aa).

170–177 (GDRQTGKT) lines the ATP pocket.

It belongs to the ATPase alpha/beta chains family. In terms of assembly, F-type ATPases have 2 components, CF(1) - the catalytic core - and CF(0) - the membrane proton channel. CF(1) has five subunits: alpha(3), beta(3), gamma(1), delta(1), epsilon(1). CF(0) has four main subunits: a(1), b(1), b'(1) and c(9-12).

The protein resides in the cellular thylakoid membrane. The catalysed reaction is ATP + H2O + 4 H(+)(in) = ADP + phosphate + 5 H(+)(out). Functionally, produces ATP from ADP in the presence of a proton gradient across the membrane. The alpha chain is a regulatory subunit. The polypeptide is ATP synthase subunit alpha (Prochlorococcus marinus (strain MIT 9303)).